Here is a 952-residue protein sequence, read N- to C-terminus: Chaperone protein ClpC2, chloroplastic (952 aa).

The transit peptide at 1-45 (MAWSIALLTPPFFGPGRHVQAKEYREPRGCVMKMSSLKAPVLRIQ) directs the protein to the chloroplast. The region spanning 115 to 257 (FERFTEKAIK…RTQVIRMVGE (143 aa)) is the Clp R domain. Repeat stretches follow at residues 118-183 (FTEK…IGRG) and 193-257 (FTPR…MVGE). The i stretch occupies residues 278-525 (LEEYGTNLTK…RVRLRHAQLP (248 aa)). 323–330 (GEPGVGKT) is a binding site for ATP. In terms of domain architecture, UVR spans 532–567 (EKQLRQITKEKNEAVRSQDFEMAGSHRDREIELKAE). The tract at residues 592 to 783 (VTESDIQHIV…LLIMTSNVGS (192 aa)) is II. ATP is bound at residue 666–673 (GPTGVGKS).

The protein belongs to the ClpA/ClpB family. ClpC subfamily. As to quaternary structure, homodimer and homohexamer. Hexamerization upon addition of ATP. Interacts with CLPT1. Interacts with CLPS1. Stably associated with the import machinery. Interacts with CLPF. Mg(2+) is required as a cofactor. Expressed at low levels in roots and inflorescences. Expressed at very low levels in rosette leaves. Expressed in photosynthetic green tissues with high levels in young, developing leaf tissues.

It is found in the plastid. The protein resides in the chloroplast stroma. The protein localises to the chloroplast membrane. It catalyses the reaction ATP + H2O = ADP + phosphate + H(+). Its function is as follows. Molecular chaperone. May act as a suppressor of FtsH-mediated thylakoid membrane biogenesis and may enhance photoinhibition. Seems not involved in chloroplastic protein import. Probable component of the TIC-associated stromal import motor involved in inner membrane translocation. Has an ATPase activity, but no ADPase activity. Interacts with transit peptides with a positional preference. Localization of the signal sequence at the N-terminal end of a protein seems mandatory for interaction to take place. This is Chaperone protein ClpC2, chloroplastic from Arabidopsis thaliana (Mouse-ear cress).